The chain runs to 525 residues: GMP synthase [glutamine-hydrolyzing] (525 aa).

The 199-residue stretch at 9-207 (RILILDFGSQ…VLQLCACEKL (199 aa)) folds into the Glutamine amidotransferase type-1 domain. C86 functions as the Nucleophile in the catalytic mechanism. Residues H181 and E183 contribute to the active site. The GMPS ATP-PPase domain occupies 208-400 (WTPANIVEDA…LGLPYDMVYR (193 aa)). ATP is bound at residue 235 to 241 (SGGVDSS).

In terms of assembly, homodimer.

It catalyses the reaction XMP + L-glutamine + ATP + H2O = GMP + L-glutamate + AMP + diphosphate + 2 H(+). It participates in purine metabolism; GMP biosynthesis; GMP from XMP (L-Gln route): step 1/1. Functionally, catalyzes the synthesis of GMP from XMP. The sequence is that of GMP synthase [glutamine-hydrolyzing] from Cellvibrio japonicus (strain Ueda107) (Pseudomonas fluorescens subsp. cellulosa).